The following is a 407-amino-acid chain: Tyrosine--tRNA ligase (407 aa).

Tyr35 contacts L-tyrosine. The 'HIGH' region signature appears at 40–49; that stretch reads PTADSLHVGH. L-tyrosine is bound by residues Tyr168 and Gln172. Residues 228–232 carry the 'KMSKS' region motif; that stretch reads KMGKT. Residue Lys231 participates in ATP binding. The 65-residue stretch at 341-405 folds into the S4 RNA-binding domain; the sequence is NLLVDLLVKC…RGKKNFNRIV (65 aa).

Belongs to the class-I aminoacyl-tRNA synthetase family. TyrS type 1 subfamily. In terms of assembly, homodimer.

It is found in the cytoplasm. It carries out the reaction tRNA(Tyr) + L-tyrosine + ATP = L-tyrosyl-tRNA(Tyr) + AMP + diphosphate + H(+). Catalyzes the attachment of tyrosine to tRNA(Tyr) in a two-step reaction: tyrosine is first activated by ATP to form Tyr-AMP and then transferred to the acceptor end of tRNA(Tyr). The polypeptide is Tyrosine--tRNA ligase (Clostridium botulinum (strain ATCC 19397 / Type A)).